Here is a 136-residue protein sequence, read N- to C-terminus: Lipoprotein YghG (136 aa).

The N-terminal stretch at 1–24 (MSIKQMPGRVLISLLLSVTGLLSG) is a signal peptide. Cysteine 25 carries the N-palmitoyl cysteine lipid modification. Residue cysteine 25 is the site of S-diacylglycerol cysteine attachment.

The protein belongs to the GspS/AspS pilotin family.

The protein localises to the cell outer membrane. Its function is as follows. Involved in a type II secretion system (T2SS, formerly general secretion pathway, GSP) for the export of folded proteins across the outer membrane. In a functional T2SS this subunit helps assemble the outer membrane channel. The protein is Lipoprotein YghG (yghG) of Escherichia coli (strain K12).